We begin with the raw amino-acid sequence, 276 residues long: MSTFRLALIQLQVSSIKSDNLTRACSLVREAAKQGANIVSLPECFNSPYGTTYFPDYAEKIPGESTQKLSEVAKESSIYLIGGSIPEEDAGKLYNTCSVFGPDGSLLVKHRKIHLFDIDVPGKITFQESKTLSPGDSFSTFDTPYCKVGLGICYDMRFAELAQIYAQRGCQLLVYPGAFNLTTGPAHWELLQRARAVDNQVYVATASPARDDKASYVAWGHSTVVDPWGQVLTKAGTEETILYSDIDLKKLAEIRQQIPILKQKRADLYTVESKKP.

The 245-residue stretch at 4–248 (FRLALIQLQV…ETILYSDIDL (245 aa)) folds into the CN hydrolase domain. S26 bears the Phosphoserine mark. E43 (proton acceptor) is an active-site residue. K68 is modified (N6-acetyllysine; alternate). Position 68 is an N6-succinyllysine; alternate (K68). The active-site Proton donor is the K112. K123 and K130 each carry N6-succinyllysine. C153 acts as the Nucleophile in catalysis.

Belongs to the carbon-nitrogen hydrolase superfamily. NIT1/NIT2 family. As to quaternary structure, homodimer.

It is found in the cytoplasm. It catalyses the reaction a monoamide of a dicarboxylate + H2O = a dicarboxylate + NH4(+). The catalysed reaction is 2-oxoglutaramate + H2O = 2-oxoglutarate + NH4(+). The enzyme catalyses 2-oxosuccinamate + H2O = oxaloacetate + NH4(+). Has omega-amidase activity. The role of omega-amidase is to remove potentially toxic intermediates by converting 2-oxoglutaramate and 2-oxosuccinamate to biologically useful 2-oxoglutarate and oxaloacetate, respectively. Can also hydrolyze gamma-monomethyl-alpha-ketoglutarate in vitro. The polypeptide is Omega-amidase NIT2 (Mus musculus (Mouse)).